Consider the following 252-residue polypeptide: MILYEYPFNERIRTLLRLEDLFDRLEYFLGQDHAQQHHVALTTLFEIIDVAGRADLKTDLIKELERQRQALAPLRANPQIDQDALDSVIGEIEQGIAMLNQTVGKAGQLLTDNEWLTSIRSRAIIPGGTCEFDLPAYYAWQHRPAEDRRADILKWARPLVSLRMGTTIVLRLLREAGQSGKVIATGGSYQQMLSGRSYQLMQVYLDDSLLAFIPEMSANKYMLWVRFTQQDGDLRPRSVDADIPFLLKLCNF.

This sequence belongs to the ZapD family. In terms of assembly, interacts with FtsZ.

Its subcellular location is the cytoplasm. Its function is as follows. Cell division factor that enhances FtsZ-ring assembly. Directly interacts with FtsZ and promotes bundling of FtsZ protofilaments, with a reduction in FtsZ GTPase activity. This is Cell division protein ZapD from Cupriavidus taiwanensis (strain DSM 17343 / BCRC 17206 / CCUG 44338 / CIP 107171 / LMG 19424 / R1) (Ralstonia taiwanensis (strain LMG 19424)).